Reading from the N-terminus, the 224-residue chain is Cytidylate kinase (224 aa).

11-19 contributes to the ATP binding site; sequence GPAAAGKST.

This sequence belongs to the cytidylate kinase family. Type 1 subfamily.

Its subcellular location is the cytoplasm. The catalysed reaction is CMP + ATP = CDP + ADP. It catalyses the reaction dCMP + ATP = dCDP + ADP. This chain is Cytidylate kinase, found in Listeria monocytogenes serotype 4b (strain CLIP80459).